The chain runs to 251 residues: MSEGESKSTHFGYKTVEVDKKAELVAGVFHSVAAKYDIMNDVMSFGIHRFWKRYTIEVSGARPGMKVLDLAGGTGDLTAKFSHLVGDKGEVVLADINDSMLKVGRTKLRDKGIVNNVSYVQANAEALPFPDNHFDIITIAFGLRNVTDKDAALRSMNRVLKPGGKLLVLEFSKPQHEIMRKVYDLYSFKVLPKMGELITKDADSYEYLAESIRMHPDQDTLKQMMVDAGFEQVDYTNMTDGIVALHRGYKF.

S-adenosyl-L-methionine-binding positions include Thr74, Asp95, and 123–124 (NA).

It belongs to the class I-like SAM-binding methyltransferase superfamily. MenG/UbiE family.

The enzyme catalyses a 2-demethylmenaquinol + S-adenosyl-L-methionine = a menaquinol + S-adenosyl-L-homocysteine + H(+). The catalysed reaction is a 2-methoxy-6-(all-trans-polyprenyl)benzene-1,4-diol + S-adenosyl-L-methionine = a 5-methoxy-2-methyl-3-(all-trans-polyprenyl)benzene-1,4-diol + S-adenosyl-L-homocysteine + H(+). Its pathway is quinol/quinone metabolism; menaquinone biosynthesis; menaquinol from 1,4-dihydroxy-2-naphthoate: step 2/2. It participates in cofactor biosynthesis; ubiquinone biosynthesis. Functionally, methyltransferase required for the conversion of demethylmenaquinol (DMKH2) to menaquinol (MKH2) and the conversion of 2-polyprenyl-6-methoxy-1,4-benzoquinol (DDMQH2) to 2-polyprenyl-3-methyl-6-methoxy-1,4-benzoquinol (DMQH2). The protein is Ubiquinone/menaquinone biosynthesis C-methyltransferase UbiE of Shewanella baltica (strain OS223).